The sequence spans 886 residues: Leucine--tRNA ligase (886 aa).

Positions 46–56 match the 'HIGH' region motif; that stretch reads PYPSGKLHMGH. A 'KMSKS' region motif is present at residues 638–642; the sequence is TMSKS. K641 contacts ATP.

It belongs to the class-I aminoacyl-tRNA synthetase family.

Its subcellular location is the cytoplasm. It carries out the reaction tRNA(Leu) + L-leucine + ATP = L-leucyl-tRNA(Leu) + AMP + diphosphate. This chain is Leucine--tRNA ligase, found in Polaromonas sp. (strain JS666 / ATCC BAA-500).